The chain runs to 176 residues: Inner membrane protein p54 (176 aa).

A helical membrane pass occupies residues 32–52 (YTILIAIVVLIIIIIVLIYLF). Positions 82-176 (VTPQPGIAKP…YTHKDLENSL (95 aa)) are disordered. The span at 123-154 (GMAAGGPAAASAPAHPAELYTTATTQNTASQT) shows a compositional bias: low complexity. Residues 142–154 (YTTATTQNTASQT) are interaction with host DYNLL1.

It belongs to the asfivirus envelope protein p54 family. Interacts with the host light chain cytoplasmic dynein DYNLL1; this interaction is critical for intracellular microtubule-dependent virus transport toward viral factories.

It is found in the virion membrane. Its subcellular location is the host cytoplasm. It localises to the host cytoskeleton. The protein resides in the host endoplasmic reticulum membrane. Inner envelope protein involved, through its interaction with host dynein, in the intracellular microtubule-dependent transport of viral capsid toward viral factories. Seems to induce caspase-3 activation and apoptosis. Plays a role in virion morphogenesis by recruiting and transforming the host ER membranes into the precursors of the viral envelope. Involved in virus attachment to the host cell. This chain is Inner membrane protein p54, found in African swine fever virus (isolate Tick/Malawi/Lil 20-1/1983) (ASFV).